A 216-amino-acid polypeptide reads, in one-letter code: Pyridoxine/pyridoxamine 5'-phosphate oxidase (216 aa).

Residues 65-70, 80-81, R86, K87, and Q109 contribute to the FMN site; these read RMVLLK and YT. K70 serves as a coordination point for substrate. Substrate contacts are provided by Y127, R131, and S135. FMN-binding positions include 144-145 and W189; that span reads QS. A substrate-binding site is contributed by 195–197; it reads RLH. R199 lines the FMN pocket.

This sequence belongs to the pyridoxamine 5'-phosphate oxidase family. Homodimer. It depends on FMN as a cofactor.

It catalyses the reaction pyridoxamine 5'-phosphate + O2 + H2O = pyridoxal 5'-phosphate + H2O2 + NH4(+). It carries out the reaction pyridoxine 5'-phosphate + O2 = pyridoxal 5'-phosphate + H2O2. Its pathway is cofactor metabolism; pyridoxal 5'-phosphate salvage; pyridoxal 5'-phosphate from pyridoxamine 5'-phosphate: step 1/1. It functions in the pathway cofactor metabolism; pyridoxal 5'-phosphate salvage; pyridoxal 5'-phosphate from pyridoxine 5'-phosphate: step 1/1. Its function is as follows. Catalyzes the oxidation of either pyridoxine 5'-phosphate (PNP) or pyridoxamine 5'-phosphate (PMP) into pyridoxal 5'-phosphate (PLP). In Sphingopyxis alaskensis (strain DSM 13593 / LMG 18877 / RB2256) (Sphingomonas alaskensis), this protein is Pyridoxine/pyridoxamine 5'-phosphate oxidase.